A 219-amino-acid polypeptide reads, in one-letter code: MARIEIDKMSKLLQVYFIMGSNNCTRDPLAVLKEALDGGVTIFQFREKGEGSLIGEDRVRFAKELQTLCKEYSVPFIVNDDVELAIELDADGVHVGQDDEGITSVREKMGDKIIGVSAHTIEEARFAIENGADYLGVGPIFPTSTKKDTKAVQGTKGLAYFREQGITVPIVGIGGITIENTAAVIEAGADGVSVISAISLAESAYESTRKLAEEVKRSL.

Residues 44 to 48 (QFREK) and asparagine 79 contribute to the 4-amino-2-methyl-5-(diphosphooxymethyl)pyrimidine site. Positions 80 and 99 each coordinate Mg(2+). Serine 117 contributes to the 4-amino-2-methyl-5-(diphosphooxymethyl)pyrimidine binding site. Residue 143 to 145 (TST) coordinates 2-[(2R,5Z)-2-carboxy-4-methylthiazol-5(2H)-ylidene]ethyl phosphate. Position 146 (lysine 146) interacts with 4-amino-2-methyl-5-(diphosphooxymethyl)pyrimidine. Residues glycine 175 and 195–196 (IS) contribute to the 2-[(2R,5Z)-2-carboxy-4-methylthiazol-5(2H)-ylidene]ethyl phosphate site.

This sequence belongs to the thiamine-phosphate synthase family. The cofactor is Mg(2+).

The enzyme catalyses 2-[(2R,5Z)-2-carboxy-4-methylthiazol-5(2H)-ylidene]ethyl phosphate + 4-amino-2-methyl-5-(diphosphooxymethyl)pyrimidine + 2 H(+) = thiamine phosphate + CO2 + diphosphate. It carries out the reaction 2-(2-carboxy-4-methylthiazol-5-yl)ethyl phosphate + 4-amino-2-methyl-5-(diphosphooxymethyl)pyrimidine + 2 H(+) = thiamine phosphate + CO2 + diphosphate. The catalysed reaction is 4-methyl-5-(2-phosphooxyethyl)-thiazole + 4-amino-2-methyl-5-(diphosphooxymethyl)pyrimidine + H(+) = thiamine phosphate + diphosphate. Its pathway is cofactor biosynthesis; thiamine diphosphate biosynthesis; thiamine phosphate from 4-amino-2-methyl-5-diphosphomethylpyrimidine and 4-methyl-5-(2-phosphoethyl)-thiazole: step 1/1. Condenses 4-methyl-5-(beta-hydroxyethyl)thiazole monophosphate (THZ-P) and 2-methyl-4-amino-5-hydroxymethyl pyrimidine pyrophosphate (HMP-PP) to form thiamine monophosphate (TMP). This is Thiamine-phosphate synthase from Bacillus cereus (strain B4264).